Here is a 331-residue protein sequence, read N- to C-terminus: Ketol-acid reductoisomerase (NADP(+)) (331 aa).

The region spanning 2–182 (ARMYYDTDAN…GGTRAGILET (181 aa)) is the KARI N-terminal Rossmann domain. NADP(+) is bound by residues 25 to 28 (YGSQ), S51, S53, and 83 to 86 (DEVQ). H108 is a catalytic residue. G134 serves as a coordination point for NADP(+). Residues 183–328 (TFREETETDL…KDLRAMFSWL (146 aa)) enclose the KARI C-terminal knotted domain. The Mg(2+) site is built by D191, E195, E227, and E231. S252 is a binding site for substrate.

It belongs to the ketol-acid reductoisomerase family. The cofactor is Mg(2+).

It carries out the reaction (2R)-2,3-dihydroxy-3-methylbutanoate + NADP(+) = (2S)-2-acetolactate + NADPH + H(+). The enzyme catalyses (2R,3R)-2,3-dihydroxy-3-methylpentanoate + NADP(+) = (S)-2-ethyl-2-hydroxy-3-oxobutanoate + NADPH + H(+). Its pathway is amino-acid biosynthesis; L-isoleucine biosynthesis; L-isoleucine from 2-oxobutanoate: step 2/4. It participates in amino-acid biosynthesis; L-valine biosynthesis; L-valine from pyruvate: step 2/4. In terms of biological role, involved in the biosynthesis of branched-chain amino acids (BCAA). Catalyzes an alkyl-migration followed by a ketol-acid reduction of (S)-2-acetolactate (S2AL) to yield (R)-2,3-dihydroxy-isovalerate. In the isomerase reaction, S2AL is rearranged via a Mg-dependent methyl migration to produce 3-hydroxy-3-methyl-2-ketobutyrate (HMKB). In the reductase reaction, this 2-ketoacid undergoes a metal-dependent reduction by NADPH to yield (R)-2,3-dihydroxy-isovalerate. The chain is Ketol-acid reductoisomerase (NADP(+)) from Rippkaea orientalis (strain PCC 8801 / RF-1) (Cyanothece sp. (strain PCC 8801)).